The chain runs to 119 residues: Large ribosomal subunit protein uL14m (119 aa).

This sequence belongs to the universal ribosomal protein uL14 family.

The protein resides in the mitochondrion. This chain is Large ribosomal subunit protein uL14m, found in Tetrahymena pyriformis.